Here is a 439-residue protein sequence, read N- to C-terminus: Synaptotagmin-B (439 aa).

Residues 1 to 74 lie on the Vesicular side of the membrane; the sequence is MQAEMNQSAE…KEKFMNELQK (74 aa). Residues asparagine 6 and asparagine 46 are each glycosylated (N-linked (GlcNAc...) asparagine). Residues 75–101 form a helical membrane-spanning segment; sequence IPLPPWALIAIAIVSGLLLLTCCLCIC. Over 102 to 439 the chain is Cytoplasmic; the sequence is KKCCCKKKKN…EVDVALGLKK (338 aa). The interval 113–155 is disordered; that stretch reads KEKGKGKKNDINMKDVKGSGGNQDDDDAETGLTEGEDKEEEAK. Basic and acidic residues predominate over residues 119–129; it reads KKNDINMKDVK. A compositionally biased stretch (acidic residues) spans 135 to 151; it reads QDDDDAETGLTEGEDKE. Positions 153 to 399 are phospholipid binding; the sequence is EAKEEEKLGK…AIGKIFVGSN (247 aa). C2 domains are found at residues 159–278 and 290–423; these read KLGK…EEWR and KLGD…AQWH. Positions 189, 190, 196, 248, 249, 250, 253, 254, 256, 321, 327, 381, 383, and 389 each coordinate Ca(2+).

It belongs to the synaptotagmin family. In terms of assembly, homodimer or homotrimer (possible). The cofactor is Ca(2+). As to expression, spinal cord, brainstem, midbrain and electric organ.

The protein resides in the cytoplasmic vesicle. The protein localises to the secretory vesicle. It localises to the synaptic vesicle membrane. Its subcellular location is the synapse. In terms of biological role, may have a regulatory role in the membrane interactions during trafficking of synaptic vesicles at the active zone of the synapse. It binds acidic phospholipids with a specificity that requires the presence of both an acidic head group and a diacyl backbone. This Diplobatis ommata (Ocellated electric ray) protein is Synaptotagmin-B (P65-B).